A 794-amino-acid chain; its full sequence is Hyaluronan mediated motility receptor (794 aa).

The tract at residues 1–87 is disordered; that stretch reads MSFPKAPLKR…SQKNDKDVKR (87 aa). At serine 20 the chain carries Phosphoserine. Over residues 74 to 87 the composition is skewed to basic and acidic residues; it reads SKKDSQKNDKDVKR. N-linked (GlcNAc...) asparagine glycosylation is found at asparagine 134, asparagine 279, asparagine 446, asparagine 467, asparagine 488, asparagine 509, asparagine 530, asparagine 561, and asparagine 601. A required for interaction with FAM83D region spans residues 365-630; the sequence is EEMTSEKNVF…ITDLKNQLRQ (266 aa). 5 consecutive repeat copies span residues 442–462, 463–483, 484–504, 505–525, and 526–546. The tract at residues 442–546 is 5 X 21 AA tandem repeats; that stretch reads QEKYNDTAQS…RDVTAQLESY (105 aa). Hyaluronic acid-binding stretches follow at residues 719–729 and 741–750; these read KQKIKHVVKLK and KLRSQLVKRK. Threonine 784 bears the Phosphothreonine mark.

As to quaternary structure, interacts with ANKRD26. Interacts with DYNLL1. Interacts with FAM83D/CHICA. Ubiquitously expressed.

It localises to the cell surface. Its subcellular location is the cytoplasm. The protein resides in the cytoskeleton. It is found in the spindle. Receptor for hyaluronic acid (HA). Involved in cell motility. When hyaluronan binds to HMMR, the phosphorylation of a number of proteins, including the PTK2/FAK1 occurs. May also be involved in cellular transformation and metastasis formation, and in regulating extracellular-regulated kinase (ERK) activity. May act as a regulator of adipogenesis. The sequence is that of Hyaluronan mediated motility receptor (Hmmr) from Mus musculus (Mouse).